Reading from the N-terminus, the 261-residue chain is 14-3-3 protein 8 (261 aa).

The segment at 237 to 261 (DIPEDGEEAPKGDAANKVGAGEDAE) is disordered.

The protein belongs to the 14-3-3 family. In terms of assembly, homodimer.

In Solanum lycopersicum (Tomato), this protein is 14-3-3 protein 8 (TFT8).